Consider the following 349-residue polypeptide: ATP phosphoribosyltransferase regulatory subunit (349 aa).

The segment at 327 to 349 is disordered; the sequence is GRGRGVRPRRASARGGRARARPR. The span at 330–349 shows a compositional bias: basic residues; sequence RGVRPRRASARGGRARARPR.

Belongs to the class-II aminoacyl-tRNA synthetase family. HisZ subfamily. As to quaternary structure, heteromultimer composed of HisG and HisZ subunits.

It is found in the cytoplasm. It participates in amino-acid biosynthesis; L-histidine biosynthesis; L-histidine from 5-phospho-alpha-D-ribose 1-diphosphate: step 1/9. Functionally, required for the first step of histidine biosynthesis. May allow the feedback regulation of ATP phosphoribosyltransferase activity by histidine. In Anaeromyxobacter dehalogenans (strain 2CP-1 / ATCC BAA-258), this protein is ATP phosphoribosyltransferase regulatory subunit.